A 163-amino-acid chain; its full sequence is Nucleotide-binding protein GWCH70_0711 (163 aa).

It belongs to the YajQ family.

Nucleotide-binding protein. In Geobacillus sp. (strain WCH70), this protein is Nucleotide-binding protein GWCH70_0711.